A 97-amino-acid chain; its full sequence is YcgL domain-containing protein Avin_32960 (97 aa).

Residues Cys-3 to Pro-87 enclose the YcgL domain.

This chain is YcgL domain-containing protein Avin_32960, found in Azotobacter vinelandii (strain DJ / ATCC BAA-1303).